Reading from the N-terminus, the 401-residue chain is Odorant receptor 88a (401 aa).

Topologically, residues 1–26 (MKPTEIKKPYRMEEFLRPQMFQEVAQ) are cytoplasmic. The chain crosses the membrane as a helical span at residues 27–47 (MVHFQWRRNPVDNSMVNASMV). The Extracellular segment spans residues 48–52 (PFCLS). The chain crosses the membrane as a helical span at residues 53–73 (AFLNVLFFGCNGWDIIGHFWL). Residues 74–142 (GHPANQNPPV…NFWQRYRFIR (69 aa)) lie on the Cytoplasmic side of the membrane. A helical membrane pass occupies residues 143-163 (IYSHLGGPMFCVVPLALFLLT). At 164–191 (HEGKDTPVAQHEQLLGGWLPCGVRKDPN) the chain is on the extracellular side. The chain crosses the membrane as a helical span at residues 192-212 (FYLLVWSFDLMCTTCGVSFFV). Residues 213–277 (TFDNLFNVMQ…LCRKYNDIFK (65 aa)) lie on the Cytoplasmic side of the membrane. The helical transmembrane segment at 278 to 298 (VAFLVSNFVGAGSLCFYLFML) threads the bilayer. The Extracellular portion of the chain corresponds to 299 to 303 (SETSD). A helical transmembrane segment spans residues 304 to 324 (VLIIAQYILPTLVLVGFTFEI). The Cytoplasmic portion of the chain corresponds to 325 to 370 (CLRGTQLEKASEGLESSLRSQEWYLGSRRYRKFYLLWTQYCQRTQQ). Residues 371-391 (LGAFGLIQVNMVHFTEIMQLA) form a helical membrane-spanning segment. Residues 392 to 401 (YRLFTFLKSH) lie on the Extracellular side of the membrane.

The protein belongs to the insect chemoreceptor superfamily. Heteromeric odorant receptor channel (TC 1.A.69) family. Or49a subfamily. As to quaternary structure, interacts with Orco. Complexes exist early in the endomembrane system in olfactory sensory neurons (OSNs), coupling these complexes to the conserved ciliary trafficking pathway. As to expression, expressed in olfactory sensory neurons in the antenna.

Its subcellular location is the cell membrane. Functionally, odorant receptor which mediates acceptance or avoidance behavior, depending on its substrates. The odorant receptor repertoire encodes a large collection of odor stimuli that vary widely in identity, intensity, and duration. May form a complex with Orco to form odorant-sensing units, providing sensitive and prolonged odorant signaling and calcium permeability. This Drosophila melanogaster (Fruit fly) protein is Odorant receptor 88a (Or88a).